A 765-amino-acid chain; its full sequence is Polyribonucleotide nucleotidyltransferase (765 aa).

Residues Asp556 and Asp562 each coordinate Mg(2+). Residues 622–681 (PRITKISIPQNKIGEVIGPKGKTINQITEETGANISIEDDGTVFVSAVGGEAAEAAIEKI) enclose the KH domain. The S1 motif domain occupies 693 to 762 (GDRFLGTVVK…NRGKISLVPV (70 aa)).

The protein belongs to the polyribonucleotide nucleotidyltransferase family. The cofactor is Mg(2+).

It localises to the cytoplasm. The enzyme catalyses RNA(n+1) + phosphate = RNA(n) + a ribonucleoside 5'-diphosphate. In terms of biological role, involved in mRNA degradation. Catalyzes the phosphorolysis of single-stranded polyribonucleotides processively in the 3'- to 5'-direction. This chain is Polyribonucleotide nucleotidyltransferase, found in Corynebacterium urealyticum (strain ATCC 43042 / DSM 7109).